The chain runs to 728 residues: Nucleolar GTP-binding protein 2 (728 aa).

Methionine 1 is modified (N-acetylmethionine). Residues 1-33 (MVKPKYKGRSTINRSAASTNPDRVQGAGGQNMR) form a disordered region. Polar residues predominate over residues 10–22 (STINRSAASTNPD). The 162-residue stretch at 207-368 (WGELYKVIDS…LIDCPGVVYP (162 aa)) folds into the CP-type G domain. GTP is bound by residues 317–324 (GYPNVGKS) and 361–365 (DCPGV). Disordered regions lie at residues 462–521 (PPNA…RNSE), 538–595 (VGPQ…DTKA), and 636–728 (YKEE…RQKQ). Residues 480-489 (EVPTETTQNN) show a composition bias toward low complexity. Basic and acidic residues predominate over residues 498–520 (EVERSDSITEKEPEGDCSQDRNS). Serine 504 bears the Phosphoserine mark. The segment covering 553–586 (SDLEDLESSGEEEEQEQEQPGEDAEEERSPDTQE) has biased composition (acidic residues). Positions 718-728 (KHRRNKFRQKQ) are enriched in basic residues.

The protein belongs to the TRAFAC class YlqF/YawG GTPase family. NOG2 subfamily. In terms of assembly, interacts with LYAR and RPL23A. Interacts with the nuclear importin-beta receptor and, at a lower extent, with importin-alpha.

The protein localises to the nucleus. It is found in the nucleolus. GTPase that associates with pre-60S ribosomal subunits in the nucleolus and is required for their nuclear export and maturation. May promote cell proliferation possibly by increasing p53/TP53 protein levels, and consequently those of its downstream product CDKN1A/p21, and decreasing RPL23A protein levels. This chain is Nucleolar GTP-binding protein 2 (Gnl2), found in Mus musculus (Mouse).